A 538-amino-acid polypeptide reads, in one-letter code: Zinc finger protein with KRAB and SCAN domains 3 (538 aa).

Phosphoserine is present on Ser42. In terms of domain architecture, SCAN box spans 46–128; the sequence is RERFRGFRYP…VLLEYLERQL (83 aa). Residue Lys171 forms a Glycyl lysine isopeptide (Lys-Gly) (interchain with G-Cter in SUMO2) linkage. Thr207 carries the phosphothreonine modification. The KRAB domain occupies 214–274; that stretch reads LKVEDVALTL…PAEELPEKEH (61 aa). Residues 226–236 are compositionally biased toward polar residues; it reads EWTQQDSSQGN. A disordered region spans residues 226-274; that stretch reads EWTQQDSSQGNLCRDEKQENHGSLVSLGDEKQTKSRDLPPAEELPEKEH. The segment covering 253 to 274 has biased composition (basic and acidic residues); sequence GDEKQTKSRDLPPAEELPEKEH. 5 consecutive C2H2-type zinc fingers follow at residues 314–336, 342–364, 370–392, 398–420, and 426–448; these read HICHECGKSFAQSSGLSKHRRIH, YECEECGKAFIGSSALVIHQRVH, YECEECGKAFSHSSDLIKHQRTH, YECDDCGKTFSQSCSLLEHHRIH, and YQCSMCGKAFRRSSHLLRHQRIH. Thr449 is subject to Phosphothreonine. 2 consecutive C2H2-type zinc fingers follow at residues 480 to 502 and 508 to 530; these read YKCNECERSFTQNTGLIEHQKIH and YQCNACGKGFTRISYLVQHQRSH.

The protein belongs to the krueppel C2H2-type zinc-finger protein family.

Its subcellular location is the nucleus. It localises to the cytoplasm. Transcriptional factor that binds to the consensus sequence 5'-[GT][AG][AGT]GGGG-3' and acts as a repressor of autophagy. Specifically represses expression of genes involved in autophagy and lysosome biogenesis/function such as MAP1LC3B, ULK1 or WIPI2. Associates with chromatin at the ITGB4 and VEGF promoters. Also acts as a transcription activator and promotes cancer cell progression and/or migration in various tumors and myelomas. This Homo sapiens (Human) protein is Zinc finger protein with KRAB and SCAN domains 3 (ZKSCAN3).